The following is a 216-amino-acid chain: Transmembrane protein 125 (216 aa).

Transmembrane regions (helical) follow at residues 32 to 52 (LLCFSVAVILVAGCGAGGVAL), 65 to 85 (LAVGTVLCLLALLVLVKQLMS), 111 to 131 (AVVVLLSGFVLLVTGLTLAGL), and 144 to 164 (MLSVGITLASLGSVLLLGLLL).

The protein localises to the membrane. This Mus musculus (Mouse) protein is Transmembrane protein 125 (Tmem125).